A 665-amino-acid chain; its full sequence is Macrolide export ATP-binding/permease protein MacB (665 aa).

One can recognise an ABC transporter domain in the interval 17-255; the sequence is MQVKGLIREF…VAQFSSIIDK (239 aa). 53 to 60 serves as a coordination point for ATP; the sequence is GQSGSGKS. Helical transmembrane passes span 287–307, 544–564, 588–608, and 630–650; these read LLTM…VGLG, IAII…LVSV, FLIE…GMAF, and SIIA…FLPA.

Belongs to the ABC transporter superfamily. Macrolide exporter (TC 3.A.1.122) family. As to quaternary structure, homodimer. Part of the tripartite efflux system MacAB-TolC, which is composed of an inner membrane transporter, MacB, a periplasmic membrane fusion protein, MacA, and an outer membrane component, TolC. The complex forms a large protein conduit and can translocate molecules across both the inner and outer membranes. Interacts with MacA.

The protein localises to the cell inner membrane. Functionally, part of the tripartite efflux system MacAB-TolC. MacB is a non-canonical ABC transporter that contains transmembrane domains (TMD), which form a pore in the inner membrane, and an ATP-binding domain (NBD), which is responsible for energy generation. Confers resistance against macrolides. The protein is Macrolide export ATP-binding/permease protein MacB of Psychrobacter arcticus (strain DSM 17307 / VKM B-2377 / 273-4).